The sequence spans 417 residues: UDP-N-acetylglucosamine 1-carboxyvinyltransferase (417 aa).

A phosphoenolpyruvate-binding site is contributed by 22–23; the sequence is KN. Arginine 92 provides a ligand contact to UDP-N-acetyl-alpha-D-glucosamine. The active-site Proton donor is the cysteine 116. A 2-(S-cysteinyl)pyruvic acid O-phosphothioketal modification is found at cysteine 116. UDP-N-acetyl-alpha-D-glucosamine-binding positions include 161–164, aspartate 305, and isoleucine 327; that span reads KVSV.

Belongs to the EPSP synthase family. MurA subfamily.

It localises to the cytoplasm. The catalysed reaction is phosphoenolpyruvate + UDP-N-acetyl-alpha-D-glucosamine = UDP-N-acetyl-3-O-(1-carboxyvinyl)-alpha-D-glucosamine + phosphate. Its pathway is cell wall biogenesis; peptidoglycan biosynthesis. In terms of biological role, cell wall formation. Adds enolpyruvyl to UDP-N-acetylglucosamine. This Pelagibacter ubique (strain HTCC1062) protein is UDP-N-acetylglucosamine 1-carboxyvinyltransferase.